We begin with the raw amino-acid sequence, 178 residues long: Large ribosomal subunit protein uL6 (178 aa).

Belongs to the universal ribosomal protein uL6 family. As to quaternary structure, part of the 50S ribosomal subunit.

This protein binds to the 23S rRNA, and is important in its secondary structure. It is located near the subunit interface in the base of the L7/L12 stalk, and near the tRNA binding site of the peptidyltransferase center. In Helicobacter pylori (strain HPAG1), this protein is Large ribosomal subunit protein uL6.